We begin with the raw amino-acid sequence, 89 residues long: Cell division topological specificity factor (89 aa).

This sequence belongs to the MinE family.

In terms of biological role, prevents the cell division inhibition by proteins MinC and MinD at internal division sites while permitting inhibition at polar sites. This ensures cell division at the proper site by restricting the formation of a division septum at the midpoint of the long axis of the cell. This is Cell division topological specificity factor from Paracoccus denitrificans (strain Pd 1222).